A 474-amino-acid chain; its full sequence is BPI fold-containing family B member 1 (474 aa).

The first 21 residues, 1-21 (MAGPWIITLLCGLLGATLVQA), serve as a signal peptide directing secretion. Asparagine 153, asparagine 160, asparagine 263, and asparagine 400 each carry an N-linked (GlcNAc...) asparagine glycan. An intrachain disulfide couples cysteine 157 to cysteine 200.

It belongs to the BPI/LBP/Plunc superfamily. Plunc family. As to expression, expressed in tongue, lung, thymus, and stomach. Expressed in epithelia of palate, anterior pharynx, trachea and upper bronchi. Expressed in distal tip of papillae in the anterior third of the tongue and in serous cells of von Ebner glands in the posterior third of the tongue. Expressed in columnar epithelium of the duodenum in embryonic gut at 16.5 dpc.

The protein localises to the secreted. Functionally, may play a role in innate immunity in mouth, nose and lungs. Binds bacterial lipopolysaccharide (LPS) and modulates the cellular responses to LPS. May be involved in formation of the left-right axis in the node of the developing embryo. The polypeptide is BPI fold-containing family B member 1 (Bpifb1) (Mus musculus (Mouse)).